Consider the following 455-residue polypeptide: Nuclear mRNA export protein THP1 (455 aa).

In terms of domain architecture, PCI spans 220-431 (IEYRYLLGRY…QLCVVKKTTM (212 aa)).

In terms of assembly, heterodimer with THP1. The SAC3-THP1 complex interacts with CDC31 and SUS1, and with the mRNA export factor MEX67-MTR2, the TREX complex component SUB2, and the nucleoporin NUP1.

It is found in the nucleus envelope. Functionally, component of the SAC3-THP1 complex, which functions in transcription-coupled mRNA export from the nucleus to the cytoplasm. SAC3-THP1 functions in docking export-competent ribonucleoprotein particles (mRNPs) to the nuclear entrance of the nuclear pore complex (nuclear basket), by association with components of the nuclear mRNA export machinery (MEX67-MTR2 and SUB2) in the nucleoplasm and the nucleoporin NUP1 at the nuclear basket. THP1 binds to RNA in vitro. This chain is Nuclear mRNA export protein THP1 (THP1), found in Saccharomyces cerevisiae (strain ATCC 204508 / S288c) (Baker's yeast).